A 207-amino-acid polypeptide reads, in one-letter code: Protein Nef (207 aa).

The N-myristoyl glycine; by host moiety is linked to residue Gly2. A Phosphoserine; by host modification is found at Ser6. The segment at 62-66 is acidic; interacts with host PACS1 and PACS2; stabilizes the interaction of NEF/MHC-I with host AP1M1; necessary for MHC-I internalization; that stretch reads EEDSD. Residues 70 to 79 form an SH3-binding; interaction with Src family tyrosine kinases region; that stretch reads PVRPQVPLRP. Residues 73-76 carry the PxxP; stabilizes the interaction of NEF/MHC-I with host AP1M1; necessary for MHC-I internalization motif; it reads PQVP. The interval 109–125 is mediates dimerization, Nef-PTE1 interaction; sequence DILDLWVYNTQGFFPDW. A binding to ATP6V1H region spans residues 149-181; it reads MDPAEIEEANKGENISLLHPICQHGMEDEDREV. The short motif at 165–166 is the Dileucine internalization motif; necessary for CD4 internalization element; sequence LL. The Diacidic; necessary for CD4 internalization motif lies at 175-176; the sequence is ED.

It belongs to the lentivirus primate group Nef protein family. As to quaternary structure, monomer; cytosolic form. Homodimer; membrane bound form. Interacts with Nef associated p21-activated kinase (PAK2); this interaction activates PAK2. Associates with the Nef-MHC-I-AP1 complex; this complex is required for MHC-I internalization. Interacts (via C-terminus) with host PI3-kinase. Interacts with host PACS1; this interaction seems to be weak. Interacts with host PACS2. Interacts with host LCK and MAPK3; these interactions inhibit the kinase activity of the latter. Interacts with host ATP6V1H; this interaction may play a role in CD4 endocytosis. Associates with the CD4-Nef-AP2 complex; this complex is required for CD4 internalization. Interacts with host AP2 subunit alpha and AP2 subunit sigma2. Interacts with TCR-zeta chain; this interaction up-regulates the Fas ligand (FasL) surface expression. Interacts with host HCK, LYN, and SRC; these interactions activate the Src family kinases. Interacts with MAP3K5; this interaction inhibits the Fas and TNFR-mediated death signals. Interacts with beta-COP and PTE1. Interacts with human RACK1; this increases Nef phosphorylation by PKC. Interacts with TP53; this interaction decreases the half-life of TP53, protecting the infected cell against p53-mediated apoptosis. The virion-associated Nef proteins are cleaved by the viral protease to release the soluble C-terminal core protein. Nef is probably cleaved concomitantly with viral structural proteins on maturation of virus particles. Post-translationally, myristoylated. In terms of processing, phosphorylated on serine residues, probably by host PKCdelta and theta.

The protein localises to the host cell membrane. Its subcellular location is the virion. It is found in the secreted. It localises to the host Golgi apparatus membrane. In terms of biological role, factor of infectivity and pathogenicity, required for optimal virus replication. Alters numerous pathways of T-lymphocyte function and down-regulates immunity surface molecules in order to evade host defense and increase viral infectivity. Alters the functionality of other immunity cells, like dendritic cells, monocytes/macrophages and NK cells. In infected CD4(+) T-lymphocytes, down-regulates the surface MHC-I, mature MHC-II, CD4, CD28, CCR5 and CXCR4 molecules. Mediates internalization and degradation of host CD4 through the interaction of with the cytoplasmic tail of CD4, the recruitment of AP-2 (clathrin adapter protein complex 2), internalization through clathrin coated pits, and subsequent transport to endosomes and lysosomes for degradation. Diverts host MHC-I molecules to the trans-Golgi network-associated endosomal compartments by an endocytic pathway to finally target them for degradation. MHC-I down-regulation may involve AP-1 (clathrin adapter protein complex 1) or possibly Src family kinase-ZAP70/Syk-PI3K cascade recruited by PACS2. In consequence infected cells are masked for immune recognition by cytotoxic T-lymphocytes. Decreasing the number of immune receptors also prevents reinfection by more HIV particles (superinfection). Down-regulates host SERINC3 and SERINC5 thereby excluding these proteins from the viral particles. Virion infectivity is drastically higher when SERINC3 or SERINC5 are excluded from the viral envelope, because these host antiviral proteins impair the membrane fusion event necessary for subsequent virion penetration. Its function is as follows. Bypasses host T-cell signaling by inducing a transcriptional program nearly identical to that of anti-CD3 cell activation. Interaction with TCR-zeta chain up-regulates the Fas ligand (FasL). Increasing surface FasL molecules and decreasing surface MHC-I molecules on infected CD4(+) cells send attacking cytotoxic CD8+ T-lymphocytes into apoptosis. Functionally, plays a role in optimizing the host cell environment for viral replication without causing cell death by apoptosis. Protects the infected cells from apoptosis in order to keep them alive until the next virus generation is ready to strike. Inhibits the Fas and TNFR-mediated death signals by blocking MAP3K5/ASK1. Decreases the half-life of TP53, protecting the infected cell against p53-mediated apoptosis. Inhibits the apoptotic signals regulated by the Bcl-2 family proteins through the formation of a Nef/PI3-kinase/PAK2 complex that leads to activation of PAK2 and induces phosphorylation of host BAD. In terms of biological role, extracellular Nef protein targets CD4(+) T-lymphocytes for apoptosis by interacting with CXCR4 surface receptors. The sequence is that of Protein Nef from Homo sapiens (Human).